Consider the following 1556-residue polypeptide: Lysine-specific demethylase 5C (1556 aa).

Residues 14 to 55 enclose the JmjN domain; the sequence is CPVFEPSWAEFRDPLGYIAKIRPIAEKSGICKIRPPADWQPP. Residues 79–169 enclose the ARID domain; that stretch reads TRVKLNYLDQ…IVYPYEMYQS (91 aa). Residues 197 to 207 are compositionally biased toward polar residues; that stretch reads LRQSVQPSKFN. The interval 197 to 227 is disordered; that stretch reads LRQSVQPSKFNSYGRRAKRLQPDPEPTEEDI. Residues lysine 205, lysine 229, lysine 244, and lysine 274 each participate in a glycyl lysine isopeptide (Lys-Gly) (interchain with G-Cter in SUMO2) cross-link. The tract at residues 257 to 303 is disordered; that stretch reads LRKKDKEGPECPPTVVVKEESGGDVKVESTSPKTFLESKEELSHSPE. The span at 273–283 shows a compositional bias: basic and acidic residues; sequence VKEESGGDVKV. At serine 287 the chain carries Phosphoserine. Lysine 295 is covalently cross-linked (Glycyl lysine isopeptide (Lys-Gly) (interchain with G-Cter in SUMO2)). Serine 301 and serine 317 each carry phosphoserine. Residues 324-374 form a PHD-type 1 zinc finger; the sequence is SYVCRMCSRGDEDDKLLLCDGCDDNYHIFCLLPPLPEIPKGVWRCPKCVMA. The JmjC domain maps to 468–634; the sequence is EYATSGWNLN…AGRQCIEHYR (167 aa). Fe cation-binding residues include histidine 514, aspartate 517, and histidine 602. 2 positions are modified to phosphoserine: serine 893 and serine 897. Residue lysine 1127 forms a Glycyl lysine isopeptide (Lys-Gly) (interchain with G-Cter in SUMO2) linkage. The PHD-type 2 zinc-finger motif lies at 1185-1250; that stretch reads TSVCVCGQVP…KFLCPLCMRS (66 aa). 2 disordered regions span residues 1315–1362 and 1441–1556; these read LQAE…SPEK and ERHG…QQQL. Residues 1335 to 1345 show a composition bias toward basic and acidic residues; that stretch reads PLREGSGKDMP. At serine 1359 the chain carries Phosphoserine. The segment covering 1445–1460 has biased composition (basic residues); sequence SRARGRALERRRRRKV. Residues 1461-1478 are compositionally biased toward basic and acidic residues; it reads DRGGEGDDPAREELEPKR. Acidic residues predominate over residues 1485–1500; that stretch reads EAEEAQEEEELEEETG. Composition is skewed to polar residues over residues 1513-1522 and 1530-1540; these read SPSTQENQNG and SGPSAPFSTLS. Positions 1541 to 1556 are enriched in low complexity; the sequence is PQLHVPCPQQPPQQQL.

It belongs to the JARID1 histone demethylase family. Part of two distinct complexes, one containing E2F6, and the other containing REST. Interacts with ZMYND8. It depends on Fe(2+) as a cofactor.

It is found in the nucleus. The enzyme catalyses N(6),N(6),N(6)-trimethyl-L-lysyl(4)-[histone H3] + 3 2-oxoglutarate + 3 O2 = L-lysyl(4)-[histone H3] + 3 formaldehyde + 3 succinate + 3 CO2. Functionally, histone demethylase that specifically demethylates 'Lys-4' of histone H3, thereby playing a central role in histone code. Does not demethylate histone H3 'Lys-9', H3 'Lys-27', H3 'Lys-36', H3 'Lys-79' or H4 'Lys-20'. Demethylates trimethylated and dimethylated but not monomethylated H3 'Lys-4'. Participates in transcriptional repression of neuronal genes by recruiting histone deacetylases and REST at neuron-restrictive silencer elements. Represses the CLOCK-BMAL1 heterodimer-mediated transcriptional activation of the core clock component PER2. This is Lysine-specific demethylase 5C (KDM5C) from Canis lupus familiaris (Dog).